We begin with the raw amino-acid sequence, 752 residues long: MSWPSLSGVPNGSSSVSTWLSVTHPRRSLPKELLTAFDTCNVAPEALLVLRSTSLMILEETCVVVGAAEMPTAEDNSGRELFIGSNGDPMERKTRTAHHAIKKTVRIKKGHRTTFAMTVANGAYVKFGARPLTEANVLVVRKWIVKLIADEYKDLRVCDQALVIDRATFLSFIPTMAWNNYKFIFHGKNAVTDRVAGENLFSRIAQWANPGKXGCPVVVTGQGCVISRAPDCAQLRVKRLLGVTKNRTCMRVSGVSPNIQIIPFNNDITTLERAIKERVFFVKNLDKGSPTKFVSPPRPAPGVFAQRLSNTLGLLVPFLPSTAPMSHQQFVDSTPSRKRKVYQQALEDISCHGLNLETDSKVKVFVKYEKTDHTSKADPVPRVISPRDPKYNLALGRYLRPMEERIFKALGKLFGHRTVMKGMDTDVTARVIQEKWNMFNKPVAIGLDASRFDQHVSLEALEFEHSVYLKCVRRMVDKRKLGNILRHQLLNKCYGNTPDGAVSYTIEGTRMSGDMNTSLGNCVLMCMMIHAYGLHKSVNIQLANNGDDCVVFLEQSDLATFSEGLFEWFLEMGFNMAIEEPSYELEHIEFCQCRPVFDGVKYTMCRNPRTAIAKDSVYLKHVDQFVTYSSWLNAVGTGGLALAGGLPIFDAFYTCYKRNSNSHWFSGRKGRLKTLSSVDDSLPWFMRELGLKGKRSSAEPLPASRASFYLAWGVTPCEQLELEKYYKSFKLDTSTLLEEHLWQPRGVFPDED.

The RdRp catalytic domain maps to 442 to 561 (PVAIGLDASR…FLEQSDLATF (120 aa)).

Belongs to the tombusviridae RNA polymerase family.

The enzyme catalyses RNA(n) + a ribonucleoside 5'-triphosphate = RNA(n+1) + diphosphate. In terms of biological role, RNA-dependent RNA polymerase that plays an essential role in the virus replication. This Oat chlorotic stunt virus (isolate United Kingdom) (OCSV) protein is RNA-directed RNA polymerase.